The sequence spans 169 residues: Putative cysteine protease YraA (169 aa).

In terms of domain architecture, PfpI endopeptidase spans 3–169 (KKIAVLVTDQ…FNRESLNLLK (167 aa)). The active-site Nucleophile is C103. H104 is a catalytic residue.

This sequence belongs to the peptidase C56 family.

Functions in the protection against aldehyde-stress, possibly by degrading damaged proteins. This chain is Putative cysteine protease YraA (yraA), found in Bacillus subtilis (strain 168).